The sequence spans 408 residues: Bone morphogenetic protein 4 (408 aa).

The signal sequence occupies residues 1–19; sequence MIPGNRMLMVVLLCQVLLG. Residues 20-292 constitute a propeptide that is removed on maturation; that stretch reads GATDASLIPE…HTLTRRRAKR (273 aa). Serine 91 carries the phosphoserine modification. The segment at 91–113 is disordered; that stretch reads SGEEEEEEQSQGTGLEYPERPAS. Residues asparagine 144 and asparagine 209 are each glycosylated (N-linked (GlcNAc...) asparagine). Positions 281-307 are disordered; the sequence is RGHTLTRRRAKRSPKHHPQRSRKKNKN. Residues 284 to 307 show a composition bias toward basic residues; it reads TLTRRRAKRSPKHHPQRSRKKNKN. Disulfide bonds link cysteine 308-cysteine 373, cysteine 337-cysteine 405, and cysteine 341-cysteine 407. N-linked (GlcNAc...) asparagine glycans are attached at residues asparagine 350 and asparagine 365.

The protein belongs to the TGF-beta family. Homodimer; disulfide-linked. Interacts with GREM2. Part of a complex consisting of TWSG1 and CHRD. Interacts with the serine proteases, HTRA1 and HTRA3; the interaction with either inhibits BMP4-mediated signaling. The HTRA protease activity is required for this inhibition. Interacts with SOSTDC1. Interacts with FBN1 (via N-terminal domain) and FBN2. Interacts with type I receptor BMPR1A. Interacts with type II receptor BMPR2. Interacts with FSTL1; this interaction inhibits the activation of the BMP4/Smad1/5/8 signaling pathway. Interacts with SCUBE3. Interacts with TGFBR3.

It localises to the secreted. The protein localises to the extracellular space. It is found in the extracellular matrix. Functionally, growth factor of the TGF-beta superfamily that plays essential roles in many developmental processes, including neurogenesis, vascular development, angiogenesis and osteogenesis. Acts in concert with PTHLH/PTHRP to stimulate ductal outgrowth during embryonic mammary development and to inhibit hair follicle induction. Initiates the canonical BMP signaling cascade by associating with type I receptor BMPR1A and type II receptor BMPR2. Once all three components are bound together in a complex at the cell surface, BMPR2 phosphorylates and activates BMPR1A. In turn, BMPR1A propagates signal by phosphorylating SMAD1/5/8 that travel to the nucleus and act as activators and repressors of transcription of target genes. Positively regulates the expression of odontogenic development regulator MSX1 via inducing the IPO7-mediated import of SMAD1 to the nucleus. Required for MSX1-mediated mesenchymal molar tooth bud development beyond the bud stage, via promoting Wnt signaling. Acts as a positive regulator of odontoblast differentiation during mesenchymal tooth germ formation, expression is repressed during the bell stage by MSX1-mediated inhibition of CTNNB1 signaling. Able to induce its own expression in dental mesenchymal cells and also in the neighboring dental epithelial cells via an MSX1-mediated pathway. Can also signal through non-canonical BMP pathways such as ERK/MAP kinase, PI3K/Akt, or SRC cascades. For example, induces SRC phosphorylation which, in turn, activates VEGFR2, leading to an angiogenic response. The sequence is that of Bone morphogenetic protein 4 from Rattus norvegicus (Rat).